A 520-amino-acid polypeptide reads, in one-letter code: Nonsense-mediated mRNA decay factor SMG9 (520 aa).

Disordered stretches follow at residues 1–94 (MSES…PAPL) and 107–143 (GKGPVAATGASTPEGTAPPPPTAPAPPKGEKEGQRPT). Position 2 is an N-acetylserine (serine 2). A phosphoserine mark is found at serine 2, serine 4, serine 7, serine 32, and serine 53. The span at 36–53 (GRERDYIAPWERERRDGS) shows a compositional bias: basic and acidic residues. Pro residues predominate over residues 78-94 (QPPPSTAPAAPPAPAPL). The segment covering 112 to 121 (AATGASTPEG) has biased composition (low complexity). A compositionally biased stretch (pro residues) spans 122 to 133 (TAPPPPTAPAPP). Serine 451 bears the Phosphoserine mark.

The protein belongs to the SMG9 family. As to quaternary structure, self-associates to form homodimers and forms heterodimers with SMG8; these assembly forms may represent SMG1C intermediate forms. Component of the SMG1C complex composed of SMG1, SMG8 and SMG9. Interacts with DHX34; the interaction is RNA-independent. In terms of processing, phosphorylated by SMG1.

Its function is as follows. Involved in nonsense-mediated decay (NMD) of mRNAs containing premature stop codons. Is recruited by release factors to stalled ribosomes together with SMG1 and SMG8 (forming the SMG1C protein kinase complex) and, in the SMG1C complex, is required for the efficient association between SMG1 and SMG8. Plays a role in brain, heart, and eye development. The sequence is that of Nonsense-mediated mRNA decay factor SMG9 from Rattus norvegicus (Rat).